The sequence spans 260 residues: ELL-associated factor 2 (260 aa).

The necessary for interaction with ELL stretch occupies residues L17 to S104. Basic and acidic residues predominate over residues G116–Q126. Disordered regions lie at residues G116 to S154 and M170 to F234. S146, S151, and S154 each carry phosphoserine. The segment covering S174 to D192 has biased composition (low complexity). A necessary for transactivation activity region spans residues D177 to D260. The segment covering P225–F234 has biased composition (basic and acidic residues). Residues R246–D260 form a necessary for interaction with TCEA1 and transactivation activity region.

It belongs to the EAF family. In terms of assembly, isoform 1 and isoform 2 interact with TCEA1. Component of the super elongation complex (SEC), at least composed of EAF1, EAF2, CDK9, MLLT3/AF9, AFF (AFF1 or AFF4), the P-TEFb complex and ELL (ELL, ELL2 or ELL3). Interacts with ELL and ELL2. As to expression, expressed in heart, brain, placenta, lung, skeletal muscle, kidney, pancreas, spleen, prostate, testis, small intestine, colon, adrenal, bone marrow, lymph node, spinal gland, stomach, thyroid, trachea, thymus, liver and leukocytes.

Its subcellular location is the nucleus speckle. Functionally, acts as a transcriptional transactivator of TCEA1 elongation activity. Acts as a transcriptional transactivator of ELL and ELL2 elongation activities. Potent inducer of apoptosis in prostatic and non-prostatic cell lines. Inhibits prostate tumor growth in vivo. In Homo sapiens (Human), this protein is ELL-associated factor 2 (EAF2).